Reading from the N-terminus, the 479-residue chain is Glutamyl-tRNA(Gln) amidotransferase subunit A (479 aa).

Residues lysine 71 and serine 146 each act as charge relay system in the active site. Serine 170 (acyl-ester intermediate) is an active-site residue.

This sequence belongs to the amidase family. GatA subfamily. Heterotrimer of A, B and C subunits.

The catalysed reaction is L-glutamyl-tRNA(Gln) + L-glutamine + ATP + H2O = L-glutaminyl-tRNA(Gln) + L-glutamate + ADP + phosphate + H(+). Functionally, allows the formation of correctly charged Gln-tRNA(Gln) through the transamidation of misacylated Glu-tRNA(Gln) in organisms which lack glutaminyl-tRNA synthetase. The reaction takes place in the presence of glutamine and ATP through an activated gamma-phospho-Glu-tRNA(Gln). The chain is Glutamyl-tRNA(Gln) amidotransferase subunit A from Lactobacillus johnsonii (strain CNCM I-12250 / La1 / NCC 533).